We begin with the raw amino-acid sequence, 221 residues long: Deoxyribose-phosphate aldolase (221 aa).

D90 acts as the Proton donor/acceptor in catalysis. K152 acts as the Schiff-base intermediate with acetaldehyde in catalysis. K181 acts as the Proton donor/acceptor in catalysis.

It belongs to the DeoC/FbaB aldolase family. DeoC type 1 subfamily.

Its subcellular location is the cytoplasm. It carries out the reaction 2-deoxy-D-ribose 5-phosphate = D-glyceraldehyde 3-phosphate + acetaldehyde. The protein operates within carbohydrate degradation; 2-deoxy-D-ribose 1-phosphate degradation; D-glyceraldehyde 3-phosphate and acetaldehyde from 2-deoxy-alpha-D-ribose 1-phosphate: step 2/2. Functionally, catalyzes a reversible aldol reaction between acetaldehyde and D-glyceraldehyde 3-phosphate to generate 2-deoxy-D-ribose 5-phosphate. The sequence is that of Deoxyribose-phosphate aldolase from Exiguobacterium sibiricum (strain DSM 17290 / CCUG 55495 / CIP 109462 / JCM 13490 / 255-15).